Consider the following 486-residue polypeptide: Probable glycine dehydrogenase (decarboxylating) subunit 2 (486 aa).

The residue at position 273 (lysine 273) is an N6-(pyridoxal phosphate)lysine.

The protein belongs to the GcvP family. C-terminal subunit subfamily. As to quaternary structure, the glycine cleavage system is composed of four proteins: P, T, L and H. In this organism, the P 'protein' is a heterodimer of two subunits. The cofactor is pyridoxal 5'-phosphate.

The enzyme catalyses N(6)-[(R)-lipoyl]-L-lysyl-[glycine-cleavage complex H protein] + glycine + H(+) = N(6)-[(R)-S(8)-aminomethyldihydrolipoyl]-L-lysyl-[glycine-cleavage complex H protein] + CO2. The glycine cleavage system catalyzes the degradation of glycine. The P protein binds the alpha-amino group of glycine through its pyridoxal phosphate cofactor; CO(2) is released and the remaining methylamine moiety is then transferred to the lipoamide cofactor of the H protein. The sequence is that of Probable glycine dehydrogenase (decarboxylating) subunit 2 from Alkaliphilus oremlandii (strain OhILAs) (Clostridium oremlandii (strain OhILAs)).